Consider the following 590-residue polypeptide: MKKVWFSLLGGAMLLGSVASGASAESSVSGPAQLTPTFHTEQWKAPSSVSGDDIVWSYLNRQKKSLLGVDSSSVREQFRIVDRTSDKSGVSHYRLKQYVNGIPVYGAEQTIHVGKSGEVTSYLGAVINEDQQEEATQGTTPKISASEAVYTAYKEAAARIEALPTSDDTISKDAEEPSSVSKDTYAEAANNDKTLSVDKDELSLDKASVLKDSKIEAVEAEKSSIAKIANLQPEVDPKAELYYYPKGDDLLLVYVTEVNVLEPAPLRTRYIIDANDGSIVFQYDIINEATGKGVLGDSKSFTTTASGSSYQLKDTTRGNGIVTYTASNRQSIPGTLLTDADNVWNDPAGVDAHAYAAKTYDYYKSKFGRNSIDGRGLQLRSTVHYGSRYNNAFWNGSQMTYGDGDGDGSTFIAFSGDPDVVGHELTHGVTEYTSNLEYYGESGALNEAFSDVIGNDIQRKNWLVGDDIYTPNICGDALRSMSNPTLYDQPHHYSNLYKGSSDNGGVHTNSGIINKAYYLLAQGGTFHGVTVNGIGRDAAVQIYYSAFTNYLTSSSDFSNARAAVIQAAKDLYGANSAEATAAAKSFDAVG.

The signal sequence occupies residues 1–24 (MKKVWFSLLGGAMLLGSVASGASA). Positions 25-286 (ESSVSGPAQL…GSIVFQYDII (262 aa)) are cleaved as a propeptide — activation peptide. Ca(2+) is bound by residues D339, D341, and D419. Residue H423 participates in Zn(2+) binding. The active site involves E424. Zn(2+)-binding residues include H427 and E447. The Ca(2+) site is built by D466, Y469, T470, I473, and D476. The active-site Proton donor is H507.

It belongs to the peptidase M4 family. The cofactor is Ca(2+). Requires Zn(2+) as cofactor.

The protein resides in the secreted. It catalyses the reaction Similar, but not identical, to that of thermolysin.. Involved in the generation of beta- and alpha-amylases from the large amylase precursor. In Paenibacillus polymyxa (Bacillus polymyxa), this protein is Bacillolysin (npr).